Reading from the N-terminus, the 269-residue chain is S-adenosylmethionine decarboxylase proenzyme (269 aa).

Residue Ser-118 is the Schiff-base intermediate with substrate; via pyruvic acid of the active site. Ser-118 carries the post-translational modification Pyruvic acid (Ser); by autocatalysis. Residue His-123 is the Proton acceptor; for processing activity of the active site. Cys-146 functions as the Proton donor; for catalytic activity in the catalytic mechanism.

This sequence belongs to the prokaryotic AdoMetDC family. Type 2 subfamily. Heterooctamer of four alpha and four beta chains arranged as a tetramer of alpha/beta heterodimers. The cofactor is pyruvate. Is synthesized initially as an inactive proenzyme. Formation of the active enzyme involves a self-maturation process in which the active site pyruvoyl group is generated from an internal serine residue via an autocatalytic post-translational modification. Two non-identical subunits are generated from the proenzyme in this reaction, and the pyruvate is formed at the N-terminus of the alpha chain, which is derived from the carboxyl end of the proenzyme. The post-translation cleavage follows an unusual pathway, termed non-hydrolytic serinolysis, in which the side chain hydroxyl group of the serine supplies its oxygen atom to form the C-terminus of the beta chain, while the remainder of the serine residue undergoes an oxidative deamination to produce ammonia and the pyruvoyl group blocking the N-terminus of the alpha chain.

The catalysed reaction is S-adenosyl-L-methionine + H(+) = S-adenosyl 3-(methylsulfanyl)propylamine + CO2. It functions in the pathway amine and polyamine biosynthesis; S-adenosylmethioninamine biosynthesis; S-adenosylmethioninamine from S-adenosyl-L-methionine: step 1/1. Catalyzes the decarboxylation of S-adenosylmethionine to S-adenosylmethioninamine (dcAdoMet), the propylamine donor required for the synthesis of the polyamines spermine and spermidine from the diamine putrescine. This chain is S-adenosylmethionine decarboxylase proenzyme, found in Brevibacillus brevis (strain 47 / JCM 6285 / NBRC 100599).